Consider the following 397-residue polypeptide: Metal tolerance protein 4 (397 aa).

Residues 1–19 show a composition bias toward basic and acidic residues; it reads MEAKGENDARAPLLAERRR. The tract at residues 1–27 is disordered; it reads MEAKGENDARAPLLAERRRNSVGSMRG. Residues 1-104 lie on the Cytoplasmic side of the membrane; sequence MEAKGENDAR…EQKQSEFAMK (104 aa). Residues 105 to 122 traverse the membrane as a helical segment; that stretch reads ISNYANMILLALKIYATI. The Vacuolar segment spans residues 123-126; that stretch reads KSGS. The chain crosses the membrane as a helical span at residues 127–147; that stretch reads IAIAASTLDSLLDLMAGGILW. The Cytoplasmic portion of the chain corresponds to 148-170; sequence FTHLSMKSINVYKYPIGKLRVQP. A helical transmembrane segment spans residues 171-191; that stretch reads VGIIIFAAVMATLGFQVFVQA. Topologically, residues 192–208 are vacuolar; sequence VEKLIVNETPDKLTPVQ. A helical transmembrane segment spans residues 209 to 229; it reads LTWLYSIMIFATVVKLALWLY. Residues 230–248 are Cytoplasmic-facing; it reads CRTSGNKIVRAYAKDHYFD. The chain crosses the membrane as a helical span at residues 249-269; the sequence is VVTNVVGLAAAVLGDMFYWWI. Position 270 (aspartate 270) is a topological domain, vacuolar. The chain crosses the membrane as a helical span at residues 271-291; sequence PVGAIALAVYTITNWSGTVWE. At 292-397 the chain is on the cytoplasmic side; sequence NAVSLVGESA…ILSKLPSSQP (106 aa).

It belongs to the cation diffusion facilitator (CDF) transporter (TC 2.A.4) family. SLC30A subfamily.

Its subcellular location is the vacuole membrane. In terms of biological role, involved in sequestration of excess metal in the cytoplasm into vacuoles to maintain metal homeostasis. In Oryza sativa subsp. japonica (Rice), this protein is Metal tolerance protein 4 (MTP4).